We begin with the raw amino-acid sequence, 166 residues long: Protein SprT (166 aa).

The region spanning E20–A164 is the SprT-like domain. Zn(2+) is bound at residue H78. Residue E79 is part of the active site. H82 serves as a coordination point for Zn(2+).

This sequence belongs to the SprT family. Zn(2+) serves as cofactor.

The protein resides in the cytoplasm. This chain is Protein SprT, found in Klebsiella pneumoniae subsp. pneumoniae (strain ATCC 700721 / MGH 78578).